A 767-amino-acid chain; its full sequence is E3 ubiquitin-protein ligase pub1 (767 aa).

Positions 1-111 (MSNSAQSRRI…AIGGDEMLTR (111 aa)) constitute a C2 domain. Positions 138 to 158 (LQVPSSAASGARTQRTSITND) are enriched in polar residues. 2 disordered regions span residues 138-216 (LQVP…RRTD) and 252-306 (SASS…RPYF). At Thr156 the chain carries Phosphothreonine. A compositionally biased stretch (low complexity) spans 159–176 (PQSSQSSSVSRNPASSRA). Ser178 is subject to Phosphoserine. Phosphothreonine is present on Thr180. Residues 184-194 (APAASPASSEP) show a composition bias toward low complexity. The 26-residue stretch at 211 to 236 (WERRTDNLGRTYYVDHNTRSTTWIRP) folds into the WW 1 domain. Over residues 257-286 (NVTEGVQPSSSNAARRTEASVLTSNATTAG) the composition is skewed to polar residues. 2 WW domains span residues 294-319 (WEQR…WVDP) and 351-376 (WEMR…WDDP). The HECT domain maps to 463–767 (FLLSHEMFNP…VEETIGFGQE (305 aa)). Cys735 (glycyl thioester intermediate) is an active-site residue.

The protein resides in the membrane. It localises to the cytoplasm. It carries out the reaction S-ubiquitinyl-[E2 ubiquitin-conjugating enzyme]-L-cysteine + [acceptor protein]-L-lysine = [E2 ubiquitin-conjugating enzyme]-L-cysteine + N(6)-ubiquitinyl-[acceptor protein]-L-lysine.. It functions in the pathway protein modification; protein ubiquitination. In terms of biological role, E3 ubiquitin-protein ligase which accepts ubiquitin from an E2 ubiquitin-conjugating enzyme in the form of a thioester and then directly transfers the ubiquitin to targeted substrates. Regulates ubiquitination of cdc25. This is E3 ubiquitin-protein ligase pub1 (pub1) from Schizosaccharomyces pombe (strain 972 / ATCC 24843) (Fission yeast).